The following is a 284-amino-acid chain: Ermin (284 aa).

Residues 1–61 (MTDVPATFTQ…APTKGSQEER (61 aa)) form a disordered region. A Phosphoserine modification is found at S73. The tract at residues 108 to 251 (TFREGRQWEK…PTLGKKSDIS (144 aa)) is disordered. Basic and acidic residues-rich tracts occupy residues 126–140 (EIRR…QPLK) and 171–183 (LHSK…KVWD). A compositionally biased stretch (acidic residues) spans 184-200 (EEIDDDDDDNCNDDEDE). The span at 201-220 (VRVIEFKKKHEEVSQFKEEG) shows a compositional bias: basic and acidic residues. S214, S226, S230, and S233 each carry phosphoserine. The segment covering 225 to 235 (DSPLSSASSQA) has biased composition (low complexity). A Phosphothreonine modification is found at T237. Residues 265–284 (KIRKGNTKQRIDEFESMMHL) form a binds actin region.

In terms of assembly, binds actin.

The protein resides in the cytoplasm. Its subcellular location is the cytoskeleton. Functionally, plays a role in cytoskeletal rearrangements during the late wrapping and/or compaction phases of myelinogenesis as well as in maintenance and stability of myelin sheath in the adult. May play an important role in late-stage oligodendroglia maturation, myelin/Ranvier node formation during CNS development, and in the maintenance and plasticity of related structures in the mature CNS. The protein is Ermin (ERMN) of Pongo abelii (Sumatran orangutan).